Reading from the N-terminus, the 593-residue chain is uncharacterized protein (593 aa).

This is an uncharacterized protein from Sinorhizobium fredii (strain NBRC 101917 / NGR234).